Reading from the N-terminus, the 717-residue chain is MKFGKRHYRPQVDQMDCGVASLAMVFGYYGSYYFLAHLRELAKTTMDGTTALGLVKVAEEIGFETRAIKADMTLFDLPDLTFPFVAHVLKEGKLLHYYVVTGQDKDSIHIADPDPGVKLTKLPRERFEEEWTGVTLFMAPSPDYKPHKEQKNGLLSFIPILVKQRGLIANIVLATLLVTVINIVGSYYLQSIIDTYVPDQMRSTLGIISIGLVIVYIFQQILSYAQEYLLLVLGQRLSIDVILSYIKHVFHLPMSFFATRRTGEIVSRFTDANSIIDALASTILSIFLDVSTVVIISLVLFSQNTNLFFMTLLALPIYTVIIFAFMKPFEKMNRDTMEANAVLSSSIIEDINGIETIKSLTSESQRYQKIDKEFVDYLKKSFTYSRAESQQKALKKVAHLLLNVGILWMGAVLVMDGKMSLGQLITYNTLLVYFTNPLENIINLQTKLQTAQVANNRLNEVYLVASEFEEKKTVEDLSLMKGDMTFKQVHYKYGYGRDVLSDINLTVPQGSKVAFVGISGSGKTTLAKMMVNFYDPSQGEISLGSVNLNQIDKKALRQYINYLSQQPYVFNGTILENLLLGAKEGTTQEDILRAVELAEIREDIERMPLNYQTELTSDGAGISGGQRQRIALARALLTDAPVLILDEATSSLDILTEKRIVDNLIALDKTLIFIAHRLTIAERTEKVVVLDQGKIVEEGKHADLLAQGGFYAHLVNS.

The Peptidase C39 domain occupies 11 to 138 (QVDQMDCGVA…EEWTGVTLFM (128 aa)). Cys-17 is an active-site residue. 6 helical membrane passes run 166 to 186 (GLIANIVLATLLVTVINIVGS), 205 to 225 (LGIISIGLVIVYIFQQILSYA), 237 to 257 (LSIDVILSYIKHVFHLPMSFF), 282 to 302 (TILSIFLDVSTVVIISLVLFS), 306 to 326 (NLFFMTLLALPIYTVIIFAFM), and 397 to 417 (VAHLLLNVGILWMGAVLVMDG). Residues 168–450 (IANIVLATLL…IINLQTKLQT (283 aa)) form the ABC transmembrane type-1 domain. The 234-residue stretch at 484 to 717 (MTFKQVHYKY…GGFYAHLVNS (234 aa)) folds into the ABC transporter domain. 517–524 (GISGSGKT) is a binding site for ATP.

It belongs to the ABC transporter superfamily. Competence factor exporter (TC 3.A.1.112.1) family.

Its subcellular location is the cell membrane. Functionally, required for induction of competence. Seems to transport the competence-stimulating peptide (CSP). The sequence is that of Transport/processing ATP-binding protein ComA (comA) from Streptococcus pneumoniae serotype 4 (strain ATCC BAA-334 / TIGR4).